The following is a 163-amino-acid chain: Succinate dehydrogenase assembly factor 2-B, mitochondrial (163 aa).

A mitochondrion-targeting transit peptide spans 1 to 23; that stretch reads MFRQLRLTMDISGWIFMPWRRSL.

It belongs to the SDHAF2 family. In terms of assembly, interacts with the flavoprotein subunit within the SDH catalytic dimer.

The protein resides in the mitochondrion matrix. Plays an essential role in the assembly of succinate dehydrogenase (SDH), an enzyme complex (also referred to as respiratory complex II) that is a component of both the tricarboxylic acid (TCA) cycle and the mitochondrial electron transport chain, and which couples the oxidation of succinate to fumarate with the reduction of ubiquinone (coenzyme Q) to ubiquinol. Required for flavinylation (covalent attachment of FAD) of the flavoprotein subunit of the SDH catalytic dimer. This chain is Succinate dehydrogenase assembly factor 2-B, mitochondrial, found in Drosophila ananassae (Fruit fly).